Reading from the N-terminus, the 73-residue chain is Translation initiation factor IF-1 (73 aa).

The S1-like domain occupies 1 to 73 (MAKKDGAIEV…SRGRIVYRYK (73 aa)).

Belongs to the IF-1 family. Component of the 30S ribosomal translation pre-initiation complex which assembles on the 30S ribosome in the order IF-2 and IF-3, IF-1 and N-formylmethionyl-tRNA(fMet); mRNA recruitment can occur at any time during PIC assembly.

It is found in the cytoplasm. Functionally, one of the essential components for the initiation of protein synthesis. Stabilizes the binding of IF-2 and IF-3 on the 30S subunit to which N-formylmethionyl-tRNA(fMet) subsequently binds. Helps modulate mRNA selection, yielding the 30S pre-initiation complex (PIC). Upon addition of the 50S ribosomal subunit IF-1, IF-2 and IF-3 are released leaving the mature 70S translation initiation complex. The polypeptide is Translation initiation factor IF-1 (Mycolicibacterium smegmatis (strain ATCC 700084 / mc(2)155) (Mycobacterium smegmatis)).